The following is a 162-amino-acid chain: Phosphopantetheine adenylyltransferase (162 aa).

Position 9 (Ser9) interacts with substrate. Residues 9-10 and His17 each bind ATP; that span reads SF. Substrate is bound by residues Lys41, Thr73, and Arg87. Residues 88-90, Glu98, and 123-129 each bind ATP; these read GLR and YSFISSS.

The protein belongs to the bacterial CoaD family. Homohexamer. Mg(2+) serves as cofactor.

The protein resides in the cytoplasm. The enzyme catalyses (R)-4'-phosphopantetheine + ATP + H(+) = 3'-dephospho-CoA + diphosphate. Its pathway is cofactor biosynthesis; coenzyme A biosynthesis; CoA from (R)-pantothenate: step 4/5. Functionally, reversibly transfers an adenylyl group from ATP to 4'-phosphopantetheine, yielding dephospho-CoA (dPCoA) and pyrophosphate. The polypeptide is Phosphopantetheine adenylyltransferase (Carboxydothermus hydrogenoformans (strain ATCC BAA-161 / DSM 6008 / Z-2901)).